A 268-amino-acid polypeptide reads, in one-letter code: Tryptophan synthase alpha chain (268 aa).

Catalysis depends on proton acceptor residues E49 and D60.

Belongs to the TrpA family. Tetramer of two alpha and two beta chains.

It carries out the reaction (1S,2R)-1-C-(indol-3-yl)glycerol 3-phosphate + L-serine = D-glyceraldehyde 3-phosphate + L-tryptophan + H2O. It functions in the pathway amino-acid biosynthesis; L-tryptophan biosynthesis; L-tryptophan from chorismate: step 5/5. Its function is as follows. The alpha subunit is responsible for the aldol cleavage of indoleglycerol phosphate to indole and glyceraldehyde 3-phosphate. The protein is Tryptophan synthase alpha chain of Yersinia pseudotuberculosis serotype O:1b (strain IP 31758).